Consider the following 452-residue polypeptide: Pup--protein ligase (452 aa).

Glutamate 9 is a binding site for Mg(2+). Position 53 (arginine 53) interacts with ATP. Tyrosine 55 serves as a coordination point for Mg(2+). Aspartate 57 serves as the catalytic Proton acceptor. Glutamate 63 is a binding site for Mg(2+). Residues threonine 66 and tryptophan 419 each coordinate ATP.

It belongs to the Pup ligase/Pup deamidase family. Pup-conjugating enzyme subfamily.

The catalysed reaction is ATP + [prokaryotic ubiquitin-like protein]-L-glutamate + [protein]-L-lysine = ADP + phosphate + N(6)-([prokaryotic ubiquitin-like protein]-gamma-L-glutamyl)-[protein]-L-lysine.. Its pathway is protein degradation; proteasomal Pup-dependent pathway. It participates in protein modification; protein pupylation. Catalyzes the covalent attachment of the prokaryotic ubiquitin-like protein modifier Pup to the proteasomal substrate proteins, thereby targeting them for proteasomal degradation. This tagging system is termed pupylation. The ligation reaction involves the side-chain carboxylate of the C-terminal glutamate of Pup and the side-chain amino group of a substrate lysine. The sequence is that of Pup--protein ligase from Thermobifida fusca (strain YX).